We begin with the raw amino-acid sequence, 1140 residues long: Kinesin-like protein KIN-14O (1140 aa).

The segment covering 1–12 has biased composition (basic and acidic residues); sequence MLESEFQREHAF. Disordered regions lie at residues 1–37, 50–81, 161–217, and 323–347; these read MLESEFQREHAFESATEQELTCPISDNLHESVEADDD, NPAESCESEEIQTKALPSSSSGQDLVASDEDS, SPGS…GGHK, and ASGTSEENETEKSKLEEKKKDKEED. Positions 161–179 are enriched in low complexity; that stretch reads SPGSSHGGSTPRSPFSPSS. The span at 180–193 shows a compositional bias: basic and acidic residues; it reads PRERHNKGLADSRF. Positions 197–209 are enriched in polar residues; it reads LPNSSALDPSSPG. A coiled-coil region spans residues 327 to 546; that stretch reads SEENETEKSK…KAKEMEEKSE (220 aa). Basic and acidic residues predominate over residues 332–347; sequence TEKSKLEEKKKDKEED. The 321-residue stretch at 632 to 952 folds into the Kinesin motor domain; sequence NIRVYCRVRP…LKFAERVSGV (321 aa). 716–723 serves as a coordination point for ATP; the sequence is GQTGSGKT. Residues 1002–1018 are compositionally biased toward polar residues; the sequence is LGQSDDFNSEAGDSQLS. 2 disordered regions span residues 1002–1021 and 1028–1140; these read LGQSDDFNSEAGDSQLSIED and DYTR…KRWS. Positions 1066–1078 are enriched in basic and acidic residues; that stretch reads EGRKPLKISDKPK. Residues 1099-1130 are compositionally biased toward polar residues; that stretch reads TMRTTNIAKATSALLSPSSQGMKKTGSASNFL.

Belongs to the TRAFAC class myosin-kinesin ATPase superfamily. Kinesin family. KIN-14 subfamily.

This chain is Kinesin-like protein KIN-14O, found in Arabidopsis thaliana (Mouse-ear cress).